Consider the following 487-residue polypeptide: MTKVRTRFAPSPTGYMHVGNLRTALYTYLIAKHDGGDFILRIEDTDQERFVEGALDIIYHTLEITGLKHDEGPDIGGPVGPYIQSQRTDIYLEYAKELIDKGKAYYCFCTKERMDSLKNKDDEEKEFYKYDKHCLKLSKEEINEKLASNIPYVIRQNNPESGFTTFHDEIYGDISVDNSELDDMILIKSDGYPTYNFANVVDDHLMGITHVVRGSEYLSSAPKYNRLYDAFGWEVPIYIHCPPIMKDAHQKLSKRNGDASFQDLIEKGYLKEAVLNYIALLGWNPGNEKEIFDLDELVELFNYKNINKSPAIFDNVKLKWMNGEYMKKLPLEEFNKMALPYYKKVISKNLDFLKISELLKIRVEILSEIPDMLDFFNELPEYSTEIYIHKKMKTNLENSLFTLEKILPKFKELSPWTLENIEKCCMDLISELQVKNGIVLWPVRIALSGKKSTPGGAFEIADIIGKDESLKRIEYGIKKLKLESGDN.

The short motif at 10–20 (PSPTGYMHVGN) is the 'HIGH' region element. Residues 251-255 (KLSKR) carry the 'KMSKS' region motif. Residue Lys-254 coordinates ATP.

The protein belongs to the class-I aminoacyl-tRNA synthetase family. Glutamate--tRNA ligase type 1 subfamily. In terms of assembly, monomer.

Its subcellular location is the cytoplasm. It catalyses the reaction tRNA(Glu) + L-glutamate + ATP = L-glutamyl-tRNA(Glu) + AMP + diphosphate. In terms of biological role, catalyzes the attachment of glutamate to tRNA(Glu) in a two-step reaction: glutamate is first activated by ATP to form Glu-AMP and then transferred to the acceptor end of tRNA(Glu). The sequence is that of Glutamate--tRNA ligase from Clostridium kluyveri (strain ATCC 8527 / DSM 555 / NBRC 12016 / NCIMB 10680 / K1).